Consider the following 414-residue polypeptide: Sec-independent protein translocase protein TatC (414 aa).

A disordered region spans residues 1-21; that stretch reads MTQSTSVSKGGRVSRKAKKNP. The next 6 membrane-spanning stretches (helical) occupy residues 45–65, 119–139, 157–177, 200–220, 238–258, and 259–279; these read IAVTTIIGFIWYEHGIPAWAI, GGLAGLVMACPIWLIEIWRFI, IAGFLFVLGVVAAYLVLPMGL, FVIALILVFGLSFEVPLFTAM, IMIVVIFIFAAIATPGQDPIS, and MLVLALTLVVLMELALQFTRI. The disordered stretch occupies residues 315–414; the sequence is IYDGDHKGIA…IQSSSFDDVL (100 aa). The segment covering 323–336 has biased composition (gly residues); sequence IAGGGDAHPAGGSG. Residues 345 to 357 are compositionally biased toward low complexity; that stretch reads TAPTRAPSASESP. Positions 403-414 are enriched in polar residues; it reads DTIQSSSFDDVL.

Belongs to the TatC family. In terms of assembly, the Tat system comprises two distinct complexes: a TatABC complex, containing multiple copies of TatA, TatB and TatC subunits, and a separate TatA complex, containing only TatA subunits. Substrates initially bind to the TatABC complex, which probably triggers association of the separate TatA complex to form the active translocon.

It is found in the cell membrane. Its function is as follows. Part of the twin-arginine translocation (Tat) system that transports large folded proteins containing a characteristic twin-arginine motif in their signal peptide across membranes. Together with TatB, TatC is part of a receptor directly interacting with Tat signal peptides. The sequence is that of Sec-independent protein translocase protein TatC from Corynebacterium kroppenstedtii (strain DSM 44385 / JCM 11950 / CIP 105744 / CCUG 35717).